The following is a 261-amino-acid chain: MKPAGDVATRVIPCLDVDGGRVVKGVNFANLRDAGDPVELAAAYDAEGADELTFLDVTASSSGRATMLDVVRRTAEQVFIPLTVGGGVRSVADVDALLRAGADKVSVNTAAIARPELLSELSRQFGSQCIVLSVDARTVPEGSQPTPSGWEVTTHGGRRGTGIDAVEWAVQGAELGVGEILLNSMDADGTKAGFDLEMLRAVRGAVTVPVIASGGAGAVEHFAPAVAAGADAVLAASVFHFGELTIGQVKAAMKAEGITVR.

Catalysis depends on residues Asp-16 and Asp-135.

The protein belongs to the HisA/HisF family. As to quaternary structure, heterodimer of HisH and HisF.

The protein resides in the cytoplasm. The enzyme catalyses 5-[(5-phospho-1-deoxy-D-ribulos-1-ylimino)methylamino]-1-(5-phospho-beta-D-ribosyl)imidazole-4-carboxamide + L-glutamine = D-erythro-1-(imidazol-4-yl)glycerol 3-phosphate + 5-amino-1-(5-phospho-beta-D-ribosyl)imidazole-4-carboxamide + L-glutamate + H(+). The protein operates within amino-acid biosynthesis; L-histidine biosynthesis; L-histidine from 5-phospho-alpha-D-ribose 1-diphosphate: step 5/9. IGPS catalyzes the conversion of PRFAR and glutamine to IGP, AICAR and glutamate. The HisF subunit catalyzes the cyclization activity that produces IGP and AICAR from PRFAR using the ammonia provided by the HisH subunit. The chain is Imidazole glycerol phosphate synthase subunit HisF from Mycolicibacterium vanbaalenii (strain DSM 7251 / JCM 13017 / BCRC 16820 / KCTC 9966 / NRRL B-24157 / PYR-1) (Mycobacterium vanbaalenii).